The following is a 433-amino-acid chain: MIKRLRGLLVMLCCVAGMAVAEEKNILVTSGSDRATPIAVVPFGLQGGSVLPEDIADIIGNDLRNSGYYSPIPRQNMISQPSQASEVIFRDWKALGAQYVMVGSIVPSGGRLQVQYALFNVATEQQVLTGSVAGSTDQLRDMAHYIADQSFEKLTGIKGAFSTRMLYVTAERFSTNNTRYTLQRSDYDGARAVTLLQSREPILSPRFAPDGKRIAYVSFEQKRPRIFVQNIDTGRREQVTNFEGLNGAPAWSPDGSRLAFVLSKDGNPDIYVMNVASRQISRVTAGPGINTEPFWGKDGNTLYFTSDRGGKPQIYKQSVSGGGAERVTFVGNYNANPKLSADEKTLVMIHRQQGFTNFKVAAQDLQRGSVKILSETSLDESPTVAPNGTMLIYATRQQGRGVLMLVSLNGRVRLPLPTAQGEVREPSWSPYLN.

The signal sequence occupies residues 1–21; sequence MIKRLRGLLVMLCCVAGMAVA.

It belongs to the TolB family. The Tol-Pal system is composed of five core proteins: the inner membrane proteins TolA, TolQ and TolR, the periplasmic protein TolB and the outer membrane protein Pal. They form a network linking the inner and outer membranes and the peptidoglycan layer.

It is found in the periplasm. Part of the Tol-Pal system, which plays a role in outer membrane invagination during cell division and is important for maintaining outer membrane integrity. This Pseudomonas putida (strain ATCC 47054 / DSM 6125 / CFBP 8728 / NCIMB 11950 / KT2440) protein is Tol-Pal system protein TolB.